A 349-amino-acid polypeptide reads, in one-letter code: Nuclear distribution protein nudE homolog 1-B (349 aa).

Residues 22-189 are a coiled coil; that stretch reads VAMKYKQCSE…ELAVQQKQEK (168 aa).

The protein belongs to the nudE family. As to quaternary structure, self-associates. Interacts with pafah1b1. Phosphorylated in mitosis.

Its subcellular location is the cytoplasm. It localises to the cytoskeleton. The protein localises to the microtubule organizing center. It is found in the centrosome. The protein resides in the spindle. Its subcellular location is the chromosome. It localises to the centromere. The protein localises to the kinetochore. It is found in the cleavage furrow. The protein resides in the cytoplasmic vesicle membrane. Functionally, required for centrosome duplication and formation and function of the mitotic spindle. This chain is Nuclear distribution protein nudE homolog 1-B (nde1-b), found in Xenopus laevis (African clawed frog).